Reading from the N-terminus, the 191-residue chain is Fe/S biogenesis protein NfuA (191 aa).

[4Fe-4S] cluster contacts are provided by cysteine 149 and cysteine 152.

The protein belongs to the NfuA family. Homodimer. The cofactor is [4Fe-4S] cluster.

In terms of biological role, involved in iron-sulfur cluster biogenesis. Binds a 4Fe-4S cluster, can transfer this cluster to apoproteins, and thereby intervenes in the maturation of Fe/S proteins. Could also act as a scaffold/chaperone for damaged Fe/S proteins. The chain is Fe/S biogenesis protein NfuA from Salmonella arizonae (strain ATCC BAA-731 / CDC346-86 / RSK2980).